A 172-amino-acid chain; its full sequence is Adenine phosphoribosyltransferase (172 aa).

This sequence belongs to the purine/pyrimidine phosphoribosyltransferase family. In terms of assembly, homodimer.

The protein localises to the cytoplasm. It catalyses the reaction AMP + diphosphate = 5-phospho-alpha-D-ribose 1-diphosphate + adenine. It participates in purine metabolism; AMP biosynthesis via salvage pathway; AMP from adenine: step 1/1. In terms of biological role, catalyzes a salvage reaction resulting in the formation of AMP, that is energically less costly than de novo synthesis. In Malacoplasma penetrans (strain HF-2) (Mycoplasma penetrans), this protein is Adenine phosphoribosyltransferase.